Consider the following 2201-residue polypeptide: Voltage-dependent T-type calcium channel subunit alpha-1I (2201 aa).

Residues 1–45 (MADSNLPPSSAAAPAPEPGITEQPGPRSPPPSPPGLEEPLEGTNP) form a disordered region. The Cytoplasmic segment spans residues 1–76 (MADSNLPPSS…RNWCIKMVCN (76 aa)). Pro residues predominate over residues 26–36 (PRSPPPSPPGL). An I repeat occupies 64–399 (TSPRNWCIKM…LCLVVIATQF (336 aa)). A helical transmembrane segment spans residues 77–97 (PWFECVSMLVILLNCVTLGMY). Over 98 to 115 (QPCDDMECLSDRCKILQV) the chain is Extracellular. A helical membrane pass occupies residues 116-137 (FDDFIFIFFAMEMVLKMVALGI). Topologically, residues 138 to 146 (FGKKCYLGD) are cytoplasmic. Residues 147–166 (TWNRLDFFIVMAGMVEYSLD) traverse the membrane as a helical segment. Topologically, residues 167 to 171 (LQNIN) are extracellular. A glycan (N-linked (GlcNAc...) asparagine) is linked at Asn-171. A helical transmembrane segment spans residues 172–189 (LSAIRTVRVLRPLKAINR). The Cytoplasmic segment spans residues 190–209 (VPSMRILVNLLLDTLPMLGN). Residues 210-230 (VLLLCFFVFFIFGIIGVQLWA) traverse the membrane as a helical segment. The Extracellular portion of the chain corresponds to 231–371 (GLLRNRCFLE…YYVMDAHSFY (141 aa)). Asn-242 and Asn-309 each carry an N-linked (GlcNAc...) asparagine glycan. Residues 372–396 (NFIYFILLIIVGSFFMINLCLVVIA) form a helical membrane-spanning segment. Residues 397–598 (TQFSETKQRE…EKLRGIVDSK (202 aa)) are Cytoplasmic-facing. Disordered stretches follow at residues 463–500 (QAMG…TPHT) and 513–579 (PSSC…AARL). The span at 545-554 (SAEAEANGDG) shows a compositional bias: low complexity. Residues 584-823 (WRETREKLRG…LLVAILVEGF (240 aa)) form an II repeat. A helical membrane pass occupies residues 599-619 (YFNRGIMMAILVNTVSMGIEH). At 620 to 632 (HEQPEELTNILEI) the chain is on the extracellular side. Residues 633–654 (CNVVFTSMFALEMILKLAAFGL) traverse the membrane as a helical segment. Residues 655-660 (FDYLRN) are Cytoplasmic-facing. The chain crosses the membrane as a helical span at residues 661-679 (PYNIFDSIIVIISIWEIVG). The Extracellular portion of the chain corresponds to 680–687 (QADGGLSV). A helical transmembrane segment spans residues 688–711 (LRTFRLLRVLKLVRFMPALRRQLV). Over 712 to 722 (VLMKTMDNVAT) the chain is Cytoplasmic. A helical transmembrane segment spans residues 723-743 (FCMLLMLFIFIFSILGMHIFG). The Extracellular segment spans residues 744 to 795 (CKFSLRTDTGDTVPDRKNFDSLLWAIVTVFQILTQEDWNVVLYNGMASTTPW). The chain crosses the membrane as a helical span at residues 796 to 820 (ASLYFVALMTFGNYVLFNLLVAILV). The Cytoplasmic segment spans residues 821-1125 (EGFQAEGDAN…NKFRILCQTI (305 aa)). Positions 936-969 (WGRSGTWASRRSSWNSLKHKPPSAEHESLLSGEG) are disordered. Over residues 941 to 951 (TWASRRSSWNS) the composition is skewed to polar residues. Residue Ser-1017 is modified to Phosphoserine. The III repeat unit spans residues 1116-1393 (NKFRILCQTI…MFVGVVVENF (278 aa)). A helical transmembrane segment spans residues 1126–1148 (IAHKLFDYVVLAFIFLNCITIAL). The Extracellular segment spans residues 1149 to 1166 (ERPQIEAGSTERIFLTVS). Residues 1167–1187 (NYIFTAIFVGEMTLKVVSLGL) form a helical membrane-spanning segment. Over 1188-1197 (YFGEQAYLRS) the chain is Cytoplasmic. The chain crosses the membrane as a helical span at residues 1198-1217 (SWNVLDGFLVFVSIIDIVVS). The Extracellular portion of the chain corresponds to 1218 to 1231 (VASAGGAKILGVLR). Residues 1232–1253 (VLRLLRTLRPLRVISRAPGLKL) form a helical membrane-spanning segment. Topologically, residues 1254-1263 (VVETLISSLK) are cytoplasmic. A helical membrane pass occupies residues 1264–1287 (PIGNIVLICCAFFIIFGILGVQLF). The Extracellular portion of the chain corresponds to 1288–1364 (KGKFYHCLGV…DQQPVTNHNP (77 aa)). Asn-1301 and Asn-1304 each carry an N-linked (GlcNAc...) asparagine glycan. The helical transmembrane segment at 1365–1390 (WMLLYFISFLLIVSFFVLNMFVGVVV) threads the bilayer. The Cytoplasmic portion of the chain corresponds to 1391–1445 (ENFHKCRQHQEAEEARRREEKRLRRLEKKRRKAQRLPYYATYCPTRLLIHSMCTS). One copy of the IV repeat lies at 1431 to 1692 (TYCPTRLLIH…VVVAVLMKHL (262 aa)). The helical transmembrane segment at 1446-1466 (HYLDIFITFIICLNVVTMSLE) threads the bilayer. The Extracellular segment spans residues 1467 to 1480 (HYNQPTSLETALKY). Residues 1481–1502 (CNYMFTTVFVLEAVLKLVAFGL) traverse the membrane as a helical segment. Over 1503-1509 (RRFFKDR) the chain is Cytoplasmic. The helical transmembrane segment at 1510–1528 (WNQLDLAIVLLSVMGITLE) threads the bilayer. Residues 1529–1542 (EIEINAALPINPTI) are Extracellular-facing. The chain crosses the membrane as a helical span at residues 1543 to 1566 (IRIMRVLRIARVLKLLKMATGMRA). Over 1567-1580 (LLDTVVQALPQVGN) the chain is Cytoplasmic. Residues 1581-1601 (LGLLFMLLFFIYAALGVELFG) form a helical membrane-spanning segment. At 1602–1664 (KLVCNDENPC…RSCLSSLQFV (63 aa)) the chain is on the extracellular side. Residues 1665–1692 (SPLYFVSFVLTAQFVLINVVVAVLMKHL) traverse the membrane as a helical segment. Over 1693-1835 (DDSNKEAQED…EVQLAETEAF (143 aa)) the chain is Cytoplasmic. 5 disordered regions span residues 1846–1876 (LLGD…PEPM), 1916–1938 (LKHD…PLLQ), 1992–2045 (SDTS…TRRR), 2057–2105 (RGLR…HSET), and 2126–2201 (LTPA…KRKR). Positions 1992 to 2007 (SDTSLDASPSSSAGSL) are enriched in low complexity. 2 stretches are compositionally biased toward polar residues: residues 2008 to 2019 (QTTLEDSLTLSD) and 2066 to 2075 (HSSGGSTSPG). Basic and acidic residues predominate over residues 2077–2090 (THHDSMDPSDEEGR).

The protein belongs to the calcium channel alpha-1 subunit (TC 1.A.1.11) family. CACNA1I subfamily. In terms of assembly, interacts with CATSPER1 and CATSPER2, leading to suppress T-type calcium channel activity. In response to raising of intracellular calcium, the T-type channels are activated by CaM-kinase II. In terms of tissue distribution, brain.

It is found in the membrane. The catalysed reaction is Ca(2+)(in) = Ca(2+)(out). Its function is as follows. Voltage-sensitive calcium channels (VSCC) mediate the entry of calcium ions into excitable cells and are also involved in a variety of calcium-dependent processes, including muscle contraction, hormone or neurotransmitter release, gene expression, cell motility, cell division and cell death. This channel gives rise to T-type calcium currents. T-type calcium channels belong to the 'low-voltage activated (LVA)' group and are strongly blocked by nickel and mibefradil. A particularity of this type of channels is an opening at quite negative potentials, and a voltage-dependent inactivation. T-type channels serve pacemaking functions in both central neurons and cardiac nodal cells and support calcium signaling in secretory cells and vascular smooth muscle. They may also be involved in the modulation of firing patterns of neurons which is important for information processing as well as in cell growth processes. Gates in voltage ranges similar to, but higher than alpha 1G or alpha 1H. In terms of biological role, voltage-sensitive calcium channels (VSCC) mediate the entry of calcium ions into excitable cells and are also involved in a variety of calcium-dependent processes, including muscle contraction, hormone or neurotransmitter release, gene expression, cell motility, cell division and cell death. This channel gives rise to T-type calcium currents. The chain is Voltage-dependent T-type calcium channel subunit alpha-1I (Cacna1i) from Rattus norvegicus (Rat).